A 1595-amino-acid polypeptide reads, in one-letter code: A disintegrin and metalloproteinase with thrombospondin motifs 7 (1595 aa).

An N-terminal signal peptide occupies residues 1 to 20; it reads MHRGLNLLLILCALAPHVLG. The propeptide occupies 21–217; it reads PASGLPTEGR…QRQQKRRQQR (197 aa). Asparagine 84 and asparagine 105 each carry an N-linked (GlcNAc...) asparagine glycan. The segment at 165–218 is disordered; that stretch reads PGHAQPHMVYKHKRSGQQDDSRTSGTCGVQGSPELKHQREHWEQRQQKRRQQRS. The short motif at 189-196 is the Cysteine switch element; the sequence is GTCGVQGS. A Zn(2+)-binding site is contributed by cysteine 191. A compositionally biased stretch (basic and acidic residues) spans 198-210; it reads ELKHQREHWEQRQ. The region spanning 223–434 is the Peptidase M12B domain; that stretch reads KWVETLVVAD…GWGLCLDDRP (212 aa). Disulfide bonds link cysteine 299–cysteine 353, cysteine 328–cysteine 335, cysteine 347–cysteine 429, cysteine 386–cysteine 413, cysteine 456–cysteine 479, cysteine 467–cysteine 485, cysteine 474–cysteine 504, cysteine 498–cysteine 509, cysteine 532–cysteine 569, cysteine 536–cysteine 574, and cysteine 547–cysteine 559. A Zn(2+)-binding site is contributed by histidine 369. Glutamate 370 is a catalytic residue. Histidine 373 and histidine 379 together coordinate Zn(2+). The region spanning 444-519 is the Disintegrin domain; the sequence is VLPGVLYDVN…VPEGFQPETV (76 aa). One can recognise a TSP type-1 1 domain in the interval 520-575; that stretch reads DGGWSGWSAWSVCSRSCGVGVRSSERQCTQPVPKNKGKYCVGERKRYRLCNLQACP. Asparagine 619 is a glycosylation site (N-linked (GlcNAc...) asparagine). Positions 680–791 are spacer; it reads HTVSRTFKEA…PGVHYKYTIQ (112 aa). 3 TSP type-1 domains span residues 801-860, 861-917, and 922-975; these read PEFS…EPCP, ARWW…IPCY, and CPSS…QPCQ. 4 disordered regions span residues 989–1035, 1077–1121, 1179–1234, and 1255–1315; these read GSSS…LDPP, PPHI…SHSP, REDT…LSPD, and KPVH…APTD. Composition is skewed to pro residues over residues 1005-1015 and 1079-1089; these read QPVPRPSPASS and HIRPTEPPSDS. A compositionally biased stretch (low complexity) spans 1220–1232; the sequence is SSPSNSTTQASLS. A compositionally biased stretch (polar residues) spans 1268–1280; that stretch reads QIQTPHTEGTQSP. 4 consecutive TSP type-1 domains span residues 1320–1368, 1371–1431, 1433–1476, and 1478–1538; these read KNAS…RHCH, PCAA…QPCL, WYTS…PCNT, and PCTQ…EDCE. Positions 1541–1581 constitute a PLAC domain; the sequence is EPSRCERDRLPFNFCETLRLLGRCQLPTIRAQCCRSCPPLS.

In terms of assembly, interacts with COMP. It depends on Zn(2+) as a cofactor. Post-translationally, glycosylated. Can be O-fucosylated by POFUT2 on a serine or a threonine residue found within the consensus sequence C1-X(2)-(S/T)-C2-G of the TSP type-1 repeat domains where C1 and C2 are the first and second cysteine residue of the repeat, respectively. Fucosylated repeats can then be further glycosylated by the addition of a beta-1,3-glucose residue by the glucosyltransferase, B3GALTL. Fucosylation mediates the efficient secretion of ADAMTS family members. Can also be C-glycosylated with one or two mannose molecules on tryptophan residues within the consensus sequence W-X-X-W of the TPRs. N- and C-glycosylations can also facilitate secretion. In terms of processing, O-glycosylated proteoglycan; contains chondroitin sulfate. May be cleaved by a furin endopeptidase. The precursor is sequentially processed. Detected in liver, ovary, kidney, testicle, lung and embryo.

It localises to the secreted. The protein resides in the extracellular space. The protein localises to the extracellular matrix. Metalloprotease. Was previously shown to degrade COMP. However, a later study found no activity against COMP. The sequence is that of A disintegrin and metalloproteinase with thrombospondin motifs 7 (Adamts7) from Rattus norvegicus (Rat).